The sequence spans 31 residues: Cytochrome b6-f complex subunit 6 (31 aa).

The chain crosses the membrane as a helical span at residues 4 to 24; that stretch reads ITSYFGFLLAALTITSALFIG.

This sequence belongs to the PetL family. As to quaternary structure, the 4 large subunits of the cytochrome b6-f complex are cytochrome b6, subunit IV (17 kDa polypeptide, PetD), cytochrome f and the Rieske protein, while the 4 small subunits are PetG, PetL, PetM and PetN. The complex functions as a dimer.

The protein resides in the plastid. The protein localises to the chloroplast thylakoid membrane. Its function is as follows. Component of the cytochrome b6-f complex, which mediates electron transfer between photosystem II (PSII) and photosystem I (PSI), cyclic electron flow around PSI, and state transitions. PetL is important for photoautotrophic growth as well as for electron transfer efficiency and stability of the cytochrome b6-f complex. This chain is Cytochrome b6-f complex subunit 6, found in Citrus sinensis (Sweet orange).